The following is a 294-amino-acid chain: Probable porphobilinogen deaminase (294 aa).

S-(dipyrrolylmethanemethyl)cysteine is present on Cys-233.

The protein belongs to the HMBS family. Dipyrromethane serves as cofactor.

The catalysed reaction is 4 porphobilinogen + H2O = hydroxymethylbilane + 4 NH4(+). It functions in the pathway porphyrin-containing compound metabolism; protoporphyrin-IX biosynthesis; coproporphyrinogen-III from 5-aminolevulinate: step 2/4. Functionally, tetrapolymerization of the monopyrrole PBG into the hydroxymethylbilane pre-uroporphyrinogen in several discrete steps. The protein is Probable porphobilinogen deaminase of Sulfurisphaera tokodaii (strain DSM 16993 / JCM 10545 / NBRC 100140 / 7) (Sulfolobus tokodaii).